Consider the following 351-residue polypeptide: Photosystem II D2 protein (351 aa).

The chain crosses the membrane as a helical span at residues 39 to 59 (TAYLAIGGWLTGTTFVTSWYT). Residue histidine 116 coordinates chlorophyll a. Residues 123–139 (GFMLRQFELARLIGIRP) form a helical membrane-spanning segment. Residues glutamine 128 and asparagine 141 each coordinate pheophytin a. A helical membrane pass occupies residues 151–164 (VFVSVFLIYPLGQS). Histidine 196 provides a ligand contact to chlorophyll a. The helical transmembrane segment at 206–226 (GALLSAIHGVTVENTLYQDGE) threads the bilayer. Positions 213 and 260 each coordinate a plastoquinone. A Fe cation-binding site is contributed by histidine 213. Histidine 267 is a binding site for Fe cation. A helical membrane pass occupies residues 277-293 (GLWTSSIGIIGLALNLR).

This sequence belongs to the reaction center PufL/M/PsbA/D family. PSII is composed of 1 copy each of membrane proteins PsbA, PsbB, PsbC, PsbD, PsbE, PsbF, PsbH, PsbI, PsbJ, PsbK, PsbL, PsbM, PsbT, PsbX, PsbY, PsbZ, Psb30/Ycf12, peripheral proteins PsbO, CyanoQ (PsbQ), PsbU, PsbV and a large number of cofactors. It forms dimeric complexes. The D1/D2 heterodimer binds P680, chlorophylls that are the primary electron donor of PSII, and subsequent electron acceptors. It shares a non-heme iron and each subunit binds pheophytin, quinone, additional chlorophylls, carotenoids and lipids. There is also a Cl(-1) ion associated with D1 and D2, which is required for oxygen evolution. The PSII complex binds additional chlorophylls, carotenoids and specific lipids. is required as a cofactor.

The protein localises to the host cellular thylakoid membrane. It catalyses the reaction 2 a plastoquinone + 4 hnu + 2 H2O = 2 a plastoquinol + O2. Photosystem II (PSII) is a light-driven water:plastoquinone oxidoreductase that uses light energy to abstract electrons from H(2)O, generating O(2) and a proton gradient subsequently used for ATP formation. It consists of a core antenna complex that captures photons, and an electron transfer chain that converts photonic excitation into a charge separation. The D1/D2 (PsbA/PsbD) reaction center heterodimer binds P680, the primary electron donor of PSII as well as several subsequent electron acceptors. D2 is needed for assembly of a stable PSII complex. The sequence is that of Photosystem II D2 protein (psbD) from Synechococcus phage S-RSM2.